We begin with the raw amino-acid sequence, 98 residues long: Dehydrin HIRD11 (98 aa).

Residues 1-98 (MAGLINKIGD…HSSSSDSDSD (98 aa)) form a disordered region. The span at 19–72 (KEGEHKKEEEHKKHVDEHKSGEHKEGIVDKIKDKIHGGEGKSHDGEGKSHDGEK) shows a compositional bias: basic and acidic residues. The segment covering 73-82 (KKKKDKKEKK) has biased composition (basic residues).

This sequence belongs to the KS-type dehydrin family. In terms of assembly, interacts with PXL1. Phosphorylated in vivo. Phosphorylated in vitro by PXL1. Highly expressed in the cambial zone of the stem vasculature (at protein level). Expressed in roots, rosettes leaves, stems, cauline leaves, flowers and siliques.

The protein localises to the cytoplasm. It is found in the nucleus. Intrinsically disordered and metal-binding protein. Binds to the divalent cations cobalt, nickel, copper and zinc, but not to magnesium, calcium, manganese or cadmium. Binding to metal ions decreases disordered state, decreases susceptibility to trypsin and promotes self-association. Can reduce the formation of reactive oxygen species (ROS) in a copper-ascorbate in vitro system. The polypeptide is Dehydrin HIRD11 (Arabidopsis thaliana (Mouse-ear cress)).